The chain runs to 422 residues: Serine hydroxymethyltransferase (422 aa).

(6S)-5,6,7,8-tetrahydrofolate is bound by residues Leu121 and 125–127 (GHL). At Lys230 the chain carries N6-(pyridoxal phosphate)lysine. 355-357 (SPF) contributes to the (6S)-5,6,7,8-tetrahydrofolate binding site.

This sequence belongs to the SHMT family. As to quaternary structure, homodimer. Pyridoxal 5'-phosphate is required as a cofactor.

Its subcellular location is the cytoplasm. The enzyme catalyses (6R)-5,10-methylene-5,6,7,8-tetrahydrofolate + glycine + H2O = (6S)-5,6,7,8-tetrahydrofolate + L-serine. Its pathway is one-carbon metabolism; tetrahydrofolate interconversion. The protein operates within amino-acid biosynthesis; glycine biosynthesis; glycine from L-serine: step 1/1. In terms of biological role, catalyzes the reversible interconversion of serine and glycine with tetrahydrofolate (THF) serving as the one-carbon carrier. This reaction serves as the major source of one-carbon groups required for the biosynthesis of purines, thymidylate, methionine, and other important biomolecules. Also exhibits THF-independent aldolase activity toward beta-hydroxyamino acids, producing glycine and aldehydes, via a retro-aldol mechanism. This is Serine hydroxymethyltransferase from Teredinibacter turnerae (strain ATCC 39867 / T7901).